Reading from the N-terminus, the 77-residue chain is Large ribosomal subunit protein uL29 (77 aa).

The protein belongs to the universal ribosomal protein uL29 family.

The protein is Large ribosomal subunit protein uL29 of Corynebacterium jeikeium (strain K411).